A 72-amino-acid polypeptide reads, in one-letter code: Translation initiation factor IF-1 (72 aa).

Residues 1–72 (MARDDVIEVD…DRGRITFRYK (72 aa)) form the S1-like domain.

The protein belongs to the IF-1 family. Component of the 30S ribosomal translation pre-initiation complex which assembles on the 30S ribosome in the order IF-2 and IF-3, IF-1 and N-formylmethionyl-tRNA(fMet); mRNA recruitment can occur at any time during PIC assembly.

The protein localises to the cytoplasm. In terms of biological role, one of the essential components for the initiation of protein synthesis. Stabilizes the binding of IF-2 and IF-3 on the 30S subunit to which N-formylmethionyl-tRNA(fMet) subsequently binds. Helps modulate mRNA selection, yielding the 30S pre-initiation complex (PIC). Upon addition of the 50S ribosomal subunit IF-1, IF-2 and IF-3 are released leaving the mature 70S translation initiation complex. The polypeptide is Translation initiation factor IF-1 (Helicobacter acinonychis (strain Sheeba)).